Consider the following 277-residue polypeptide: Ribosomal protein L11 methyltransferase (277 aa).

Thr-130, Gly-151, Asp-172, and Asn-213 together coordinate S-adenosyl-L-methionine.

Belongs to the methyltransferase superfamily. PrmA family.

It is found in the cytoplasm. The catalysed reaction is L-lysyl-[protein] + 3 S-adenosyl-L-methionine = N(6),N(6),N(6)-trimethyl-L-lysyl-[protein] + 3 S-adenosyl-L-homocysteine + 3 H(+). Functionally, methylates ribosomal protein L11. The sequence is that of Ribosomal protein L11 methyltransferase from Campylobacter concisus (strain 13826).